The primary structure comprises 840 residues: MPSYLTRQKTRQTFSWVGRPLPNRKQFQQMYREICMKINDGSEIHIKVGQFVLIQGEDNKKPYVAKLIELFQNGAEVPPKKCARVQWFVRFLEIPVSKRHLLGRSPPAQEIFWYDCSDWDNKINVETIIGPVQVVALAPEEVIPVDQKSEETLFVKLSWNKKDFAPLPPEVLAALREQEDSPEWQKPLKAKIKNVKSPARNTTEQEVKGIKSNHSTSKFHQTPANIVIPNAKKSLELDGLGFTRKPNTRWSKKSSCDSLDYQKTSKRRAAFSETTSPPKKPNKPREIKPSSALETRVKNGQTQPFCAKSSVVLRARNPAMTTTKLGVDNTLSPIRNGLRSSVVPSGGLTPVYIRRKAKEQETHKEPIRTSRVHRKSSLLTLKRIRQQLCLLDGDDRDQEEEESVDSESEEEDEFISSLPTRNSLGQSRTRQTPSKSPQKNPKPRTPHRATPQIRDRNLAVQEPASALEEARLRLHVSAVPDSLPCREQEFQDIYSFVESKLLDGTGGCMYISGVPGTGKTATVHEVIRCLQQAAETDDVPPFQYVEVNGMKLTEPHQVYVQILKKLTGQKATANHAAELLAKQFCGQGSQKETTVLLVDELDLLWTHKQDVMYNLFDWPTHKGAHLIVLTIANTMDLPERIMMNRVSSRLGLTRMSFQPYSHSQLKQILVSRLRNLRAFEDDAIQLVARKVAALSGDARRCLDICRRATEICELSHLRGDSLSLVTVAHLMEAIDEMFSSSYITAIKNSSVVEQSFLRAIIAEFRRSGLEEATFQQIYSQHVALCRMEGLPYPTMSETMAVCSRLGSCRLLLVEPSRNDLLLRVRLNVSQNDVLFALKEE.

Residues 44-170 (IHIKVGQFVL…KKDFAPLPPE (127 aa)) form the BAH domain. Disordered stretches follow at residues 195-218 (VKSP…STSK) and 242-301 (FTRK…KNGQ). 6 positions are modified to phosphoserine: Ser197, Ser255, Ser258, Ser276, Ser291, and Ser332. Positions 392-414 (DGDDRDQEEEESVDSESEEEDEF) are enriched in acidic residues. A disordered region spans residues 392-456 (DGDDRDQEEE…HRATPQIRDR (65 aa)). Polar residues predominate over residues 418 to 439 (LPTRNSLGQSRTRQTPSKSPQK). ATP contacts are provided by residues Val479 and 513 to 521 (GVPGTGKTA). The segment at 480–840 (PDSLPCREQE…NDVLFALKEE (361 aa)) is necessary and sufficient for ORC complex assembly. 2 residues coordinate Mg(2+): Asp599 and Glu600. 3 residues coordinate ATP: Glu600, Asn633, and Arg699.

It belongs to the ORC1 family. Component of ORC, a complex composed of at least 6 subunits: ORC1, ORC2, ORC3, ORC4, ORC5 and ORC6. ORC is regulated in a cell-cycle dependent manner. It is sequentially assembled at the exit from anaphase of mitosis and disassembled as cells enter S phase. Interacts with CDC6 and KAT7/HBO1. Interacts with LRWD1 predominantly during the G1 phase and with less affinity during mitosis, when phosphorylated. In terms of processing, phosphorylated during mitosis.

It is found in the nucleus. In terms of biological role, component of the origin recognition complex (ORC) that binds origins of replication. DNA-binding is ATP-dependent. The specific DNA sequences that define origins of replication have not been identified yet. ORC is required to assemble the pre-replication complex necessary to initiate DNA replication. The sequence is that of Origin recognition complex subunit 1 (Orc1) from Mus musculus (Mouse).